Reading from the N-terminus, the 497-residue chain is GTPase-activating protein GYP8 (497 aa).

In terms of domain architecture, Rab-GAP TBC spans 69-281 (FVNNSLRKDC…QIFDMTISMQ (213 aa)).

In Saccharomyces cerevisiae (strain ATCC 204508 / S288c) (Baker's yeast), this protein is GTPase-activating protein GYP8 (GYP8).